Consider the following 87-residue polypeptide: Small ribosomal subunit protein bS20 (87 aa).

The disordered stretch occupies residues 1–20 (MANHKSAEKRARQTIKKTER).

This sequence belongs to the bacterial ribosomal protein bS20 family.

Binds directly to 16S ribosomal RNA. This is Small ribosomal subunit protein bS20 from Campylobacter jejuni subsp. jejuni serotype O:2 (strain ATCC 700819 / NCTC 11168).